Reading from the N-terminus, the 1250-residue chain is MDRDSSMQAKNLDAQCNPDLKMASANSETLASATHELKIMDVEGGALVDPDHIEEVETSMVIVVDDDDGDVAMVVEEDKHPMRDDPCIEDIMDDEHAPLVAELQSALNNPDDKQASEDPLLEDQEREPDAMSTKTEPSSDAESSHSYHDPMGLLERIEIHDPGDSQDDDDEDDESSNGGGVDGGMRRKMPRAQRWLLWMKRWPWILHEDSDGTLAFCLYCNISINVNNRSRHIQQHNVSLSHQERECNYLAFKKSEEETRGAISDNEIKHEFGTKSYVAAMKQKRISETEAFNNFNWLRWLRWHPWLERSMPTGTIGTCRICSVRMNVEFVYLRKRHETTKGHMEALRNLDSDKRSRKRKRSKSNSVTNSGGDEAEREKESEPEVGPEDAQDTPVVMMNGDVDSGDDPGKWCALIPDTNPQQCRCTLCNCTMAITSFLRHCKTRAHCHMLSTPAEKGSSDIRGIWAVFADMHPWLIADPEDPSIGYCSVCRKRFMYGNSEIKRKNHEKSEKHTLALASAKAGIEVGSADGRGGDNMDEEEAAASDQAQSSQTDDSEDNDDDNWSEIQKLGKGFAHKSSSEPRKATVRAGVRFYPWLCYSKDRKTQICKFCRVRFHNEAAKARHELSARHVKLVKQFKMRQAKLHQGTNTQTKHNAQDDEESQEQDEEYGEEEEDAEEDSQSNFDLGTVQARKTARADNKLFVKPIPATMKGKVMVWKGRFPWLSYKKNEQRGNYAWCKLCEVSLYLPSSKWASKHQRTSRHIRLRIDRKRNGGNPLKTSNKNSGEISTVVATASALASAEARQKAAMAELQAKYDWLDPDANDENHCHCRVCDSRLPIKVFYLRQHDASRKHVENKERQRANAAAAANAPSVSPTSTVDAERQESGMDKESENDMSVRSDGSTAEPLAKRSRRSMEVRRIIRALRDSMGKRQEERSQMDMARDMICSSFDIVTRLRTLERESVAHNESMAQAPPSVTVSPIKPPEPRHVMDLFFDSISPTMKSLPPDLAAEGKSKIMQLVCSLELRAMQRNATTPTPATVSASSKWPSSTTVTPVKTPPAPISAPLASVDADLHSSVVTTPHEYNNGQNNNNDKETVPKEPVTGASSAQVTINGSAKDLPENIRRILTSNQTQVTNRLETDSVRCVPLDKLTTQSRTNVNGRLSQGGTSEAPSTPQADLSNGNTLAMIRQIRVNNNNSSKITVTNTPQMQQPQQAQASITSSTPIMRGGPSSNGCQITTFRTMVNHNRRP.

2 disordered regions span residues 107-148 (LNNP…HSYH) and 160-186 (HDPGDSQDDDDEDDESSNGGGVDGGMR). Residues 132-141 (STKTEPSSDA) show a composition bias toward polar residues. A compositionally biased stretch (acidic residues) spans 164 to 175 (DSQDDDDEDDES). Phosphoserine occurs at positions 165, 175, and 176. C2H2-type zinc fingers lie at residues 217–236 (CLYCNISINVNNRSRHIQQH), 319–343 (CRICSVRMNVEFVYLRKRHETTKGH), 425–446 (CTLCNCTMAITSFLRHCKTRAH), and 487–512 (CSVCRKRFMYGNSEIKRKNHEKSEKH). Residues 343–354 (HMEALRNLDSDK) are compositionally biased toward basic and acidic residues. Residues 343 to 398 (HMEALRNLDSDKRSRKRKRSKSNSVTNSGGDEAEREKESEPEVGPEDAQDTPVVMM) form a disordered region. Positions 525-564 (VGSADGRGGDNMDEEEAAASDQAQSSQTDDSEDNDDDNWS) are disordered. Over residues 543 to 552 (ASDQAQSSQT) the composition is skewed to low complexity. The segment covering 553–563 (DDSEDNDDDNW) has biased composition (acidic residues). The C2H2-type 5 zinc finger occupies 605-629 (QICKFCRVRFHNEAAKARHELSARH). The tract at residues 642 to 684 (KLHQGTNTQTKHNAQDDEESQEQDEEYGEEEEDAEEDSQSNFD) is disordered. Positions 657–679 (DDEESQEQDEEYGEEEEDAEEDS) are enriched in acidic residues. 2 consecutive C2H2-type zinc fingers follow at residues 737–761 (CKLCEVSLYLPSSKWASKHQRTSRH) and 829–852 (CRVCDSRLPIKVFYLRQHDASRKH). Positions 851–860 (KHVENKERQR) are enriched in basic and acidic residues. Residues 851-915 (KHVENKERQR…PLAKRSRRSM (65 aa)) form a disordered region. 2 positions are modified to phosphoserine: Ser871 and Ser873. Basic and acidic residues predominate over residues 879–897 (DAERQESGMDKESENDMSV). Ser975 bears the Phosphoserine mark. In terms of domain architecture, BESS spans 987 to 1026 (RHVMDLFFDSISPTMKSLPPDLAAEGKSKIMQLVCSLELR). Over residues 1032 to 1055 (ATTPTPATVSASSKWPSSTTVTPV) the composition is skewed to low complexity. 4 disordered regions span residues 1032–1060 (ATTPTPATVSASSKWPSSTTVTPVKTPPA), 1079–1116 (TTPHEYNNGQNNNNDKETVPKEPVTGASSAQVTINGSA), 1154–1180 (QSRTNVNGRLSQGGTSEAPSTPQADLS), and 1205–1236 (NTPQMQQPQQAQASITSSTPIMRGGPSSNGCQ). Composition is skewed to polar residues over residues 1079-1091 (TTPHEYNNGQNNN) and 1104-1114 (GASSAQVTING). The segment covering 1206 to 1224 (TPQMQQPQQAQASITSSTP) has biased composition (low complexity).

In terms of assembly, interacts with Su(var)39 through the BESS domain.

It is found in the nucleus. Functionally, dose-limiting factor in position-effect variegation, the inactivation in some cells of a gene translocated next to heterochromatin. It could play a role in chromosome condensation. This chain is Protein suppressor of variegation 3-7 (Su(var)3-7), found in Drosophila melanogaster (Fruit fly).